The sequence spans 839 residues: Molybdenum cofactor sulfurase (839 aa).

Lysine 237 is modified (N6-(pyridoxal phosphate)lysine). Cysteine 401 is an active-site residue. Over residues 651–662 the composition is skewed to polar residues; that stretch reads DQNYSQKQSPSM. Residues 651–678 are disordered; that stretch reads DQNYSQKQSPSMPGSFPQAPSSPDPYPT. One can recognise an MOSC domain in the interval 656–834; the sequence is QKQSPSMPGS…IMVGDAVTPS (179 aa).

Belongs to the class-V pyridoxal-phosphate-dependent aminotransferase family. MOCOS subfamily. The cofactor is pyridoxal 5'-phosphate.

The enzyme catalyses Mo-molybdopterin + L-cysteine + AH2 = thio-Mo-molybdopterin + L-alanine + A + H2O. Its pathway is cofactor biosynthesis; molybdopterin biosynthesis. Functionally, sulfurates the molybdenum cofactor. Sulfation of molybdenum is essential for xanthine dehydrogenase (XDH) and aldehyde oxidase (ADO) enzymes in which molybdenum cofactor is liganded by 1 oxygen and 1 sulfur atom in active form. The sequence is that of Molybdenum cofactor sulfurase from Emericella nidulans (strain FGSC A4 / ATCC 38163 / CBS 112.46 / NRRL 194 / M139) (Aspergillus nidulans).